The following is a 315-amino-acid chain: MAIQIVLIVGPTASGKSKLAVDVAKEFNGEIISADSMQVYKYMDVGTAKITKEEMQGIPHYLIDIVEPDQEFSVAEYEKRAKEIIKDIYKRGKLPIIVGGTGLYINSIIYIMHFSDFEGSKEFREKMKELANTYGSQYLYEKLKSVDPEAAKKIHPNDIRRIIRALEVYEFTGKPISYYQKMSGMRLNPEYQPIMIGLNFRDRQILYDRINQRVDEMIKNNLVEEVVNLLKIGYNKDSTAMQALGYKEIVEYLKGEISLEEAIEKIKKGTRRYAKRQITWFKGYDFIKWFFVDDYKNYEELKKNIIKYLAGKLNF.

10–17 serves as a coordination point for ATP; the sequence is GPTASGKS. 12-17 provides a ligand contact to substrate; the sequence is TASGKS. The interaction with substrate tRNA stretch occupies residues 35–38; sequence DSMQ.

Belongs to the IPP transferase family. Monomer. The cofactor is Mg(2+).

The enzyme catalyses adenosine(37) in tRNA + dimethylallyl diphosphate = N(6)-dimethylallyladenosine(37) in tRNA + diphosphate. Its function is as follows. Catalyzes the transfer of a dimethylallyl group onto the adenine at position 37 in tRNAs that read codons beginning with uridine, leading to the formation of N6-(dimethylallyl)adenosine (i(6)A). This is tRNA dimethylallyltransferase from Thermoanaerobacter pseudethanolicus (strain ATCC 33223 / 39E) (Clostridium thermohydrosulfuricum).